Here is a 143-residue protein sequence, read N- to C-terminus: MDQTLSDFGNVFVFLLLGVVFVAGGYLTARMLRPSRPNPVKNSTYECGEEAVGSSWVKFNIRFYVVALIFIIFDVEVVFLFPWATVFRQLGSFALIEALVFAGILILGLVYAWVKGDLDWVRPTPSVPKMPEMPSPRQSAGRD.

Transmembrane regions (helical) follow at residues 8–28 (FGNV…GYLT), 63–83 (FYVV…LFPW), and 93–113 (FALI…VYAW).

Belongs to the complex I subunit 3 family. NDH-1 is composed of 14 different subunits. Subunits NuoA, H, J, K, L, M, N constitute the membrane sector of the complex.

The protein resides in the cell inner membrane. It catalyses the reaction a quinone + NADH + 5 H(+)(in) = a quinol + NAD(+) + 4 H(+)(out). Functionally, NDH-1 shuttles electrons from NADH, via FMN and iron-sulfur (Fe-S) centers, to quinones in the respiratory chain. The immediate electron acceptor for the enzyme in this species is believed to be a menaquinone. Couples the redox reaction to proton translocation (for every two electrons transferred, four hydrogen ions are translocated across the cytoplasmic membrane), and thus conserves the redox energy in a proton gradient. The chain is NADH-quinone oxidoreductase subunit A from Chlorobium luteolum (strain DSM 273 / BCRC 81028 / 2530) (Pelodictyon luteolum).